The primary structure comprises 78 residues: Acyl carrier protein (78 aa).

The Carrier domain occupies serine 2–leucine 77. Serine 37 is modified (O-(pantetheine 4'-phosphoryl)serine).

This sequence belongs to the acyl carrier protein (ACP) family. In terms of processing, 4'-phosphopantetheine is transferred from CoA to a specific serine of apo-ACP by AcpS. This modification is essential for activity because fatty acids are bound in thioester linkage to the sulfhydryl of the prosthetic group.

It localises to the cytoplasm. It functions in the pathway lipid metabolism; fatty acid biosynthesis. In terms of biological role, carrier of the growing fatty acid chain in fatty acid biosynthesis. The protein is Acyl carrier protein of Acinetobacter baylyi (strain ATCC 33305 / BD413 / ADP1).